A 457-amino-acid chain; its full sequence is MALWGGRFSQAADQRFKQFNDSLRFDYRLAEQDIIGSVAWSKALVTVGVLNADEQQQLEQALSVLLEEVQANPHAILASDAEDIHSWVETKLIDKVGDLGKKLHTGRSRNDQVATDLKLWCKFQITELQTAVQQLQQALVMTAEANQDAVMPGYTHLQRAQPVTFAHWCLAYVEMLSRDESRLQDTLKRLDVSPLGCGALAGTAYAIDREQLAGWLGFASATRNSLDSVSDRDHVLELLSDASIGMVHLSRFAEDLIFFNSGEAAFVDLSDRVTSGSSLMPQKKNPDALELIRGKCGRVQGALTGMTMTLKGLPLAYNKDMQEDKEGLFDALNTWLDCLHMAALVLDGIQVKRPRCKEAAEQGYANATELADYLVAKGVPFREAHHIVGEAVVEAIRQGKALEALALSDLQQFSSVIGDDVYPILALQSCLDKRVAKGGVSPQQVASAIAEAKARLF.

This sequence belongs to the lyase 1 family. Argininosuccinate lyase subfamily.

It localises to the cytoplasm. It carries out the reaction 2-(N(omega)-L-arginino)succinate = fumarate + L-arginine. It participates in amino-acid biosynthesis; L-arginine biosynthesis; L-arginine from L-ornithine and carbamoyl phosphate: step 3/3. In Yersinia pseudotuberculosis serotype IB (strain PB1/+), this protein is Argininosuccinate lyase.